We begin with the raw amino-acid sequence, 448 residues long: Methylenetetrahydrofolate--tRNA-(uracil-5-)-methyltransferase TrmFO (448 aa).

13–18 (GAGLAG) lines the FAD pocket.

It belongs to the MnmG family. TrmFO subfamily. It depends on FAD as a cofactor.

It is found in the cytoplasm. It catalyses the reaction uridine(54) in tRNA + (6R)-5,10-methylene-5,6,7,8-tetrahydrofolate + NADH + H(+) = 5-methyluridine(54) in tRNA + (6S)-5,6,7,8-tetrahydrofolate + NAD(+). It carries out the reaction uridine(54) in tRNA + (6R)-5,10-methylene-5,6,7,8-tetrahydrofolate + NADPH + H(+) = 5-methyluridine(54) in tRNA + (6S)-5,6,7,8-tetrahydrofolate + NADP(+). Functionally, catalyzes the folate-dependent formation of 5-methyl-uridine at position 54 (M-5-U54) in all tRNAs. This is Methylenetetrahydrofolate--tRNA-(uracil-5-)-methyltransferase TrmFO from Streptococcus pyogenes serotype M6 (strain ATCC BAA-946 / MGAS10394).